A 330-amino-acid polypeptide reads, in one-letter code: Malate dehydrogenase (330 aa).

An NAD(+)-binding site is contributed by G13 to G19. Residues R94 and R100 each contribute to the substrate site. Residues N107, Q114, and V131–N133 each bind NAD(+). Substrate contacts are provided by N133 and R164. H189 serves as the catalytic Proton acceptor.

The protein belongs to the LDH/MDH superfamily. MDH type 2 family.

The catalysed reaction is (S)-malate + NAD(+) = oxaloacetate + NADH + H(+). Catalyzes the reversible oxidation of malate to oxaloacetate. This Deinococcus radiodurans (strain ATCC 13939 / DSM 20539 / JCM 16871 / CCUG 27074 / LMG 4051 / NBRC 15346 / NCIMB 9279 / VKM B-1422 / R1) protein is Malate dehydrogenase.